Consider the following 269-residue polypeptide: 4-hydroxy-tetrahydrodipicolinate reductase (269 aa).

Residues 11–16 and E37 each bind NAD(+); that span reads GASGRM. R38 serves as a coordination point for NADP(+). NAD(+) is bound by residues 101–103 and 125–128; these read GTT and AGNM. Residue H158 is the Proton donor/acceptor of the active site. (S)-2,3,4,5-tetrahydrodipicolinate is bound at residue H159. The active-site Proton donor is K162. A (S)-2,3,4,5-tetrahydrodipicolinate-binding site is contributed by 168 to 169; the sequence is GT.

The protein belongs to the DapB family.

The protein resides in the cytoplasm. The enzyme catalyses (S)-2,3,4,5-tetrahydrodipicolinate + NAD(+) + H2O = (2S,4S)-4-hydroxy-2,3,4,5-tetrahydrodipicolinate + NADH + H(+). It carries out the reaction (S)-2,3,4,5-tetrahydrodipicolinate + NADP(+) + H2O = (2S,4S)-4-hydroxy-2,3,4,5-tetrahydrodipicolinate + NADPH + H(+). It participates in amino-acid biosynthesis; L-lysine biosynthesis via DAP pathway; (S)-tetrahydrodipicolinate from L-aspartate: step 4/4. Functionally, catalyzes the conversion of 4-hydroxy-tetrahydrodipicolinate (HTPA) to tetrahydrodipicolinate. This chain is 4-hydroxy-tetrahydrodipicolinate reductase, found in Cereibacter sphaeroides (strain ATCC 17023 / DSM 158 / JCM 6121 / CCUG 31486 / LMG 2827 / NBRC 12203 / NCIMB 8253 / ATH 2.4.1.) (Rhodobacter sphaeroides).